Reading from the N-terminus, the 418-residue chain is Glutamyl-tRNA reductase (418 aa).

Residues 49–52, Ser109, 114–116, and Gln120 contribute to the substrate site; these read TCNR and EPQ. The active-site Nucleophile is the Cys50. 189–194 is a binding site for NADP(+); the sequence is GAGETI.

This sequence belongs to the glutamyl-tRNA reductase family. Homodimer.

The catalysed reaction is (S)-4-amino-5-oxopentanoate + tRNA(Glu) + NADP(+) = L-glutamyl-tRNA(Glu) + NADPH + H(+). It participates in porphyrin-containing compound metabolism; protoporphyrin-IX biosynthesis; 5-aminolevulinate from L-glutamyl-tRNA(Glu): step 1/2. Catalyzes the NADPH-dependent reduction of glutamyl-tRNA(Glu) to glutamate 1-semialdehyde (GSA). This chain is Glutamyl-tRNA reductase, found in Klebsiella pneumoniae (strain 342).